Reading from the N-terminus, the 617-residue chain is Sphingosine kinase 2 (617 aa).

The tract at residues 1 to 140 (MAPPPLLPVA…LSGDQEITPE (140 aa)) is required for binding to sulfatide and phosphoinositides and for membrane localization. The Nuclear localization signal signature appears at 87 to 95 (RGRRGGRRR). The DAGKc domain maps to 143–290 (PRKPRLLILV…LDLLSVTLAS (148 aa)). ATP is bound by residues 153-155 (NPF) and 185-189 (TERQN). 210–213 (SGDG) contacts substrate. Residue D212 is the Proton donor/acceptor of the active site. Residues E217 and 242–244 (GSG) each bind ATP. D309 is a binding site for substrate. The ATP site is built by R316 and R322. Phosphoserine occurs at positions 358 and 364. The interval 371–472 (APAPAATHSP…GFLPPTHSAP (102 aa)) is disordered. T377 is modified (phosphothreonine). A Nuclear export signal motif is present at residues 381-390 (LHRSVSDLPL). Phosphoserine is present on residues S384 and S386. Over residues 412-426 (NGGGPELTGDWGGAG) the composition is skewed to gly residues. The residue at position 578 (T578) is a Phosphothreonine. 586 to 588 (DGE) contacts ATP.

In terms of assembly, interacts with histone H3. Interacts with HDAC1, HDAC2, MBD2 and SIN3A. Interacts with EEF1A1; the interaction enhances SPHK2 kinase activity. Interacts with PHB2. Requires Mg(2+) as cofactor. In terms of processing, phosphorylated by PKD on Ser-384 and Ser-386 upon PMA treatment. Phosphorylation induces export from the nucleus to the cytoplasm. Phosphorylated by MAPK1 and MAPK2 at Thr-578, phosphorylation is induced by agonists such as EGF and PMA and increases kinase activity. Post-translationally, cleaved by CASP1 in apoptotic cells. The truncated form is released from cells. In terms of tissue distribution, expressed in heart, brain, liver, kidney and testis. Expressed by mast cells (at protein level). In the substantia nigra, expressed by dopaminergic neurons (at protein level).

Its subcellular location is the lysosome membrane. It localises to the cytoplasm. The protein localises to the cell membrane. It is found in the endoplasmic reticulum. The protein resides in the nucleus. Its subcellular location is the mitochondrion inner membrane. It carries out the reaction a sphingoid base + ATP = a sphingoid 1-phosphate + ADP + H(+). The enzyme catalyses sphing-4-enine + ATP = sphing-4-enine 1-phosphate + ADP + H(+). The catalysed reaction is sphinganine + ATP = sphinganine 1-phosphate + ADP + H(+). It catalyses the reaction (4R)-hydroxysphinganine + ATP = (4R)-hydroxysphinganine 1-phosphate + ADP + H(+). Functionally, catalyzes the phosphorylation of sphingosine to form sphingosine-1-phosphate (SPP), a lipid mediator with both intra- and extracellular functions. Also acts on D-erythro-dihydrosphingosine, D-erythro-sphingosine and L-threo-dihydrosphingosine. Binds phosphoinositides. In contrast to prosurvival SPHK1, has a positive effect on intracellular ceramide levels, inhibits cells growth and enhances apoptosis. In mitochondria, is important for cytochrome-c oxidase assembly and mitochondrial respiration. The SPP produced in mitochondria binds PHB2 and modulates the regulation via PHB2 of complex IV assembly and respiration. In nucleus, plays a role in epigenetic regulation of gene expression. Interacts with HDAC1 and HDAC2 and, through SPP production, inhibits their enzymatic activity, preventing the removal of acetyl groups from lysine residues with histones. Up-regulates acetylation of histone H3-K9, histone H4-K5 and histone H2B-K12. In nucleus, may have an inhibitory effect on DNA synthesis and cell cycle. In mast cells, is the main regulator of SPP production which mediates calcium influx, NF-kappa-B activation, cytokine production, such as TNF and IL6, and degranulation of mast cells. In dopaminergic neurons, is involved in promoting mitochondrial functions regulating ATP and ROS levels. Also involved in the regulation of glucose and lipid metabolism. This Mus musculus (Mouse) protein is Sphingosine kinase 2.